Reading from the N-terminus, the 908-residue chain is MDSAALEKMTGAKFPAVQGVIEEFSRDRVQNVLGDMRSRQVIKYAVGLSEASVQELRFNWPCFTWEEESVPLPPHPFAAYSRRAFTRWAIAQCGPVPIKDFGGNWFLHWQWQTGVHSCCPLLNPRDGAHQTRRELNMESYLRTHGPKYDKFNELSRPDLCHHRAEDCSVRAKAALSVDSAYDMGLKNTCKAMHRAGIELLHGNILFDPDMLIEAKMEGFVAGMNYHWKKTRRSTGLMSSFLEMGSSLFGVSNSSKEGEGHHDLKIKMGSSSTHMVPADWEISYHFRDDCVLGYTHNLADVLSIATGSYVKVGNTFYELERTGLKSGMLMYTITACKGLYDRASARSTPLSAKASTVIINGMSYQVGEKLDPISFPYLAASFYMQAQKAVFEVQQVVDLHTPNRNLWSWFKKKFELKAHAFLFALGLRDSHDEWLLDQIEFELNETVCTLPGEFLEPVSEVERLDAALEDWRRDRERLNGKSVENLKTLTVLVELAKKLGISAYEVLNSHQNESERPKDQWHVEAALFEAVELERAHWKMLTAEAQAMSLQDPLSREAKSKGWSYESSDSLPCAYAYVFSEGRFVKPADLKKKTRVLVSPSMQIMNQIRMAESLEKAIAMNVKSCKKTWIDGVAGCGKTYEIVHTADIFKKDDLILTANKKSQEDIFSQLKPGTDCAKRIRTVDSYLLKPDVQAKRLFIDEAGLVHPGKLLAAMRFAECDDCLLFGDSEQIPFVNIVESLQPAKFLKLEVDAREVRETTYRCPADVTATLATLYKKKKIVTKSKVLKSVTSKSLASASAVSGLDPHSWHLTMYQADKAELVRVARTNQMDDVWIKEHIKTVHEAQGISVPHVKLYRFKTFDQPLFDAAHAEAYRLVAISRHTQSFTYIGVNQHLCKADRMLKFVICQIP.

The segment at 47 to 341 (GLSEASVQEL…ITACKGLYDR (295 aa)) is methyltransferase. The 239-residue stretch at 66–304 (EEESVPLPPH…HNLADVLSIA (239 aa)) folds into the Alphavirus-like MT domain. One can recognise a (+)RNA virus helicase ATP-binding domain in the interval 599–755 (PSMQIMNQIR…KLEVDAREVR (157 aa)). Positions 629–887 (IDGVAGCGKT…SRHTQSFTYI (259 aa)) are ATP-dependent helicase. Residues 756–908 (ETTYRCPADV…MLKFVICQIP (153 aa)) enclose the (+)RNA virus helicase C-terminal domain.

It belongs to the bromoviridae replication protein 1a family. Interacts with RNA-directed RNA polymerase 2a.

It is found in the host endoplasmic reticulum membrane. Its function is as follows. Involved in the virus replication. Contains a helicase domain and a methyltransferase domain. The methyltransferase domain is probably involved in viral RNA capping. Involved in the formation of ER membrane spherular invaginations in which RNA replication complexes form. The protein is Replication protein 1a of Olea (OLV-2).